The following is a 736-amino-acid chain: Catalase-peroxidase (736 aa).

The disordered stretch occupies residues 1 to 21; sequence MSNEQKCPFSGTHGARTTVGT. Residues 96-224 constitute a cross-link (tryptophyl-tyrosyl-methioninium (Trp-Tyr) (with M-250)); sequence WHSAGTYRTG…LAAVQMGLIY (129 aa). The active-site Proton acceptor is histidine 97. A cross-link (tryptophyl-tyrosyl-methioninium (Tyr-Met) (with W-96)) is located at residues 224–250; it reads YVNPEGPDGNPDPVASGRDIRETFARM. Residue histidine 265 participates in heme b binding.

The protein belongs to the peroxidase family. Peroxidase/catalase subfamily. Homodimer or homotetramer. It depends on heme b as a cofactor. Formation of the three residue Trp-Tyr-Met cross-link is important for the catalase, but not the peroxidase activity of the enzyme.

It catalyses the reaction H2O2 + AH2 = A + 2 H2O. The catalysed reaction is 2 H2O2 = O2 + 2 H2O. In terms of biological role, bifunctional enzyme with both catalase and broad-spectrum peroxidase activity. The chain is Catalase-peroxidase from Dechloromonas aromatica (strain RCB).